A 75-amino-acid chain; its full sequence is Small ribosomal subunit protein bS18 (75 aa).

A2 is subject to N-acetylalanine.

The protein belongs to the bacterial ribosomal protein bS18 family. As to quaternary structure, part of the 30S ribosomal subunit. Forms a tight heterodimer with protein bS6.

Its function is as follows. Binds as a heterodimer with protein bS6 to the central domain of the 16S rRNA, where it helps stabilize the platform of the 30S subunit. The polypeptide is Small ribosomal subunit protein bS18 (rpsR) (Salmonella typhimurium (strain LT2 / SGSC1412 / ATCC 700720)).